The following is a 177-amino-acid chain: Peptide methionine sulfoxide reductase MsrA (177 aa).

Residue C12 is part of the active site.

Belongs to the MsrA Met sulfoxide reductase family.

The catalysed reaction is L-methionyl-[protein] + [thioredoxin]-disulfide + H2O = L-methionyl-(S)-S-oxide-[protein] + [thioredoxin]-dithiol. It carries out the reaction [thioredoxin]-disulfide + L-methionine + H2O = L-methionine (S)-S-oxide + [thioredoxin]-dithiol. Has an important function as a repair enzyme for proteins that have been inactivated by oxidation. Catalyzes the reversible oxidation-reduction of methionine sulfoxide in proteins to methionine. The sequence is that of Peptide methionine sulfoxide reductase MsrA from Halobacterium salinarum (strain ATCC 29341 / DSM 671 / R1).